The chain runs to 238 residues: MKLSLSVALSLAAATAQAATQFCDQWGSVTEGNYILYNNLWGQAQATSGSQCTTFESLSGNTIVWNTKWSWSGGQGQVKSFANAALQFTPKKLSSVKSIDSTWKWNYSGSNIVADVAYDMFLSTSPGGDHNYEIMVWLGALGGAGPISSTGSPIATPTVAGIKFNLYLGPNGSMQVYSFVAQSTTNSFSGDMRDFFTYLESNQGLSSDLYLVDVQAGTEPFSGSNAVFTVSDYSVSVA.

An N-terminal signal peptide occupies residues 1 to 18 (MKLSLSVALSLAAATAQA). N106 and N171 each carry an N-linked (GlcNAc...) asparagine glycan.

Belongs to the glycosyl hydrolase 12 (cellulase H) family.

It is found in the secreted. The catalysed reaction is xyloglucan + H2O = xyloglucan oligosaccharides.. Functionally, catalyzes endohydrolysis of 1,4-beta-D-glucosidic linkages in xyloglucan with retention of the beta-configuration of the glycosyl residues. Specific for xyloglucan and does not hydrolyze other cell wall components. This Aspergillus fumigatus (strain CBS 144.89 / FGSC A1163 / CEA10) (Neosartorya fumigata) protein is Probable xyloglucan-specific endo-beta-1,4-glucanase A (xgeA).